Consider the following 668-residue polypeptide: Major S-layer protein (668 aa).

Positions 1 to 24 (MKRFAAVTLAALMLLTVFASAASA) are cleaved as a signal peptide. Asparagine 36, asparagine 65, asparagine 111, asparagine 265, asparagine 583, asparagine 596, asparagine 602, asparagine 608, asparagine 617, and asparagine 635 each carry an N-linked (GlcNAc...) asparagine glycan. The interval 584–650 (ETTSITKPDE…ESNGSPGFGV (67 aa)) is disordered. The span at 596–611 (NETVSDNETMPDNTSS) shows a compositional bias: polar residues. Residues 631–641 (EPTDNETEPDE) are compositionally biased toward acidic residues. Residues 644-664 (GSPGFGVVLGLAGLLGVVYLV) form a helical membrane-spanning segment.

It belongs to the Methanosarcinales S-layer protein family. Glycosylated.

It localises to the secreted. The protein resides in the cell wall. It is found in the S-layer. The protein localises to the cell membrane. Functionally, S-layer protein. The S-layer is a paracrystalline mono-layered assembly of proteins which coat the surface of the cell. The protein is Major S-layer protein of Methanosarcina barkeri (strain Fusaro / DSM 804).